Reading from the N-terminus, the 320-residue chain is E3 ubiquitin-protein ligase RZF1 (320 aa).

N-acetylserine is present on Ser2. The RING-type; atypical zinc finger occupies 186–227 (CPVCKDEFELKSEAKQMPCHHIYHSDCIVPWLVQHNSCPVCR). The tract at residues 229 to 320 (ELPSRGSSSS…MGYSGWPFDY (92 aa)) is disordered. Composition is skewed to low complexity over residues 232–249 (SRGS…STNG) and 295–308 (QQQQ…QQQQ).

In terms of tissue distribution, expressed in seedlings and in flowers.

It carries out the reaction S-ubiquitinyl-[E2 ubiquitin-conjugating enzyme]-L-cysteine + [acceptor protein]-L-lysine = [E2 ubiquitin-conjugating enzyme]-L-cysteine + N(6)-ubiquitinyl-[acceptor protein]-L-lysine.. Its function is as follows. E3 ubiquitin-protein ligase that promotes osmotic stress and abscisic acid (ABA) responses. Negatively regulates drought-mediated control of early seedling development, probably by influencing proline content, water loss, membrane ion leakage and the expression of dehydration stress-related genes (e.g. RAB18, RD29A, RD29B, AOX1A, ERD15, ERD1, COR15A, P5CS1 and P5CR). Modulates bZIP11 accumulation during rehydration following drought. In Arabidopsis thaliana (Mouse-ear cress), this protein is E3 ubiquitin-protein ligase RZF1.